The chain runs to 427 residues: Kynureninase (427 aa).

Pyridoxal 5'-phosphate is bound by residues Thr104, Thr105, 132–135 (FPSD), Asp213, His216, and Tyr238. The residue at position 239 (Lys239) is an N6-(pyridoxal phosphate)lysine. Pyridoxal 5'-phosphate-binding residues include Trp267 and Thr295.

Belongs to the kynureninase family. Homodimer. Pyridoxal 5'-phosphate serves as cofactor.

It catalyses the reaction L-kynurenine + H2O = anthranilate + L-alanine + H(+). It carries out the reaction 3-hydroxy-L-kynurenine + H2O = 3-hydroxyanthranilate + L-alanine + H(+). Its pathway is amino-acid degradation; L-kynurenine degradation; L-alanine and anthranilate from L-kynurenine: step 1/1. It participates in cofactor biosynthesis; NAD(+) biosynthesis; quinolinate from L-kynurenine: step 2/3. Functionally, catalyzes the cleavage of L-kynurenine (L-Kyn) and L-3-hydroxykynurenine (L-3OHKyn) into anthranilic acid (AA) and 3-hydroxyanthranilic acid (3-OHAA), respectively. This is Kynureninase from Shouchella clausii (strain KSM-K16) (Alkalihalobacillus clausii).